The sequence spans 181 residues: Epidermin decarboxylase (181 aa).

The active site involves histidine 67.

This sequence belongs to the HFCD (homooligomeric flavin containing Cys decarboxylase) superfamily. As to quaternary structure, homododecamer. It depends on FMN as a cofactor.

Its function is as follows. Catalyzes the removal of two reducing equivalents (oxidative decarboxylation) from the cysteine residue of the C-terminal meso-lanthionine of epidermin to form a --C==C-- double bond. This Staphylococcus epidermidis protein is Epidermin decarboxylase (epiD).